Consider the following 338-residue polypeptide: Ketol-acid reductoisomerase (NADP(+)) (338 aa).

The KARI N-terminal Rossmann domain maps to 1 to 181 (MKVFYDKDAD…GGGRAGIIET (181 aa)). NADP(+)-binding positions include 24 to 27 (YGSQ), Arg47, and Ser52. The active site involves His107. Residue Gly133 coordinates NADP(+). The KARI C-terminal knotted domain occupies 182–327 (NFREETETDL…EKLRAMMPWI (146 aa)). The Mg(2+) site is built by Asp190, Glu194, Glu226, and Glu230. A substrate-binding site is contributed by Ser251.

It belongs to the ketol-acid reductoisomerase family. The cofactor is Mg(2+).

It carries out the reaction (2R)-2,3-dihydroxy-3-methylbutanoate + NADP(+) = (2S)-2-acetolactate + NADPH + H(+). The enzyme catalyses (2R,3R)-2,3-dihydroxy-3-methylpentanoate + NADP(+) = (S)-2-ethyl-2-hydroxy-3-oxobutanoate + NADPH + H(+). It participates in amino-acid biosynthesis; L-isoleucine biosynthesis; L-isoleucine from 2-oxobutanoate: step 2/4. The protein operates within amino-acid biosynthesis; L-valine biosynthesis; L-valine from pyruvate: step 2/4. In terms of biological role, involved in the biosynthesis of branched-chain amino acids (BCAA). Catalyzes an alkyl-migration followed by a ketol-acid reduction of (S)-2-acetolactate (S2AL) to yield (R)-2,3-dihydroxy-isovalerate. In the isomerase reaction, S2AL is rearranged via a Mg-dependent methyl migration to produce 3-hydroxy-3-methyl-2-ketobutyrate (HMKB). In the reductase reaction, this 2-ketoacid undergoes a metal-dependent reduction by NADPH to yield (R)-2,3-dihydroxy-isovalerate. The protein is Ketol-acid reductoisomerase (NADP(+)) of Cupriavidus pinatubonensis (strain JMP 134 / LMG 1197) (Cupriavidus necator (strain JMP 134)).